We begin with the raw amino-acid sequence, 1358 residues long: Insulin-like growth factor 1 receptor (1358 aa).

A signal peptide spans 1 to 25 (MKAELVPVCTAWILGLLLCLGPAAA). Cys-28 and Cys-47 are oxidised to a cystine. Residues Asn-74, Asn-99, and Asn-132 are each glycosylated (N-linked (GlcNAc...) asparagine). Intrachain disulfides connect Cys-147/Cys-175, Cys-179/Cys-202, Cys-189/Cys-208, Cys-212/Cys-221, Cys-216/Cys-227, Cys-228/Cys-236, Cys-232/Cys-245, Cys-248/Cys-257, Cys-261/Cys-273, Cys-279/Cys-299, Cys-303/Cys-317, Cys-320/Cys-324, and Cys-328/Cys-347. The N-linked (GlcNAc...) asparagine glycan is linked to Asn-241. Asn-310 carries N-linked (GlcNAc...) asparagine glycosylation. 2 N-linked (GlcNAc...) asparagine glycosylation sites follow: Asn-411 and Asn-432. Cys-449 and Cys-482 form a disulfide bridge. Fibronectin type-III domains are found at residues 483–603 (ESHV…TDAA), 604–702 (VPSI…TEAE), 727–818 (PRPN…FVFA), and 829–924 (IPGI…LKPD). 5 N-linked (GlcNAc...) asparagine glycosylation sites follow: Asn-488, Asn-528, Asn-616, Asn-634, and Asn-669. Positions 670–691 (GTIDTEGGTEPTKPEGSVGEKG) are disordered. At 735–934 (DVLAVGNSTV…VRNNILQMVV (200 aa)) the chain is on the extracellular side. N-linked (GlcNAc...) asparagine glycans are attached at residues Asn-741, Asn-750, Asn-758, Asn-895, and Asn-908. Residues 935–955 (AIPLALSFLLVGIISIVCFVF) traverse the membrane as a helical segment. The Cytoplasmic portion of the chain corresponds to 956-1358 (KKRNSNRLGN…ALPLPQSSAC (403 aa)). Residue Tyr-976 is modified to Phosphotyrosine; by autocatalysis. The region spanning 995–1270 (ITMNRELGQG…SIKDELDPGF (276 aa)) is the Protein kinase domain. ATP contacts are provided by residues 1001 to 1009 (LGQGSFGMV) and Lys-1029. Asp-1131 functions as the Proton acceptor in the catalytic mechanism. Tyr-1157, Tyr-1161, and Tyr-1162 each carry phosphotyrosine; by autocatalysis. Residues 1336–1358 (PYAHMNGGRKNERALPLPQSSAC) are disordered.

It belongs to the protein kinase superfamily. Tyr protein kinase family. Insulin receptor subfamily. In terms of assembly, tetramer of 2 alpha and 2 beta chains linked by disulfide bonds. The alpha chains contribute to the formation of the ligand-binding domain, while the beta chain carries the kinase domain. It depends on Mn(2+) as a cofactor. In terms of processing, the cytoplasmic domain of the beta subunit is autophosphorylated on Tyr residues in response to low concentrations of insulin-like growth factor (IGF1) and higher concentrations of insulin.

The protein localises to the cell membrane. The catalysed reaction is L-tyrosyl-[protein] + ATP = O-phospho-L-tyrosyl-[protein] + ADP + H(+). Its activity is regulated as follows. Autophosphorylation activates the kinase activity. Its function is as follows. This receptor binds insulin-like growth factor 1 (IGF1) with a high affinity and IGF2 with a lower affinity. It has a tyrosine-protein kinase activity, which is necessary for the activation of the IGF1-stimulated downstream signaling cascade. Plays a role in oocyte maturation. Promotes head development by inhibiting Wnt signaling during embryogenesis. The polypeptide is Insulin-like growth factor 1 receptor (igf1r) (Xenopus laevis (African clawed frog)).